A 130-amino-acid polypeptide reads, in one-letter code: Small ribosomal subunit protein uS8 (130 aa).

Belongs to the universal ribosomal protein uS8 family. Part of the 30S ribosomal subunit.

Functionally, one of the primary rRNA binding proteins, it binds directly to 16S rRNA central domain where it helps coordinate assembly of the platform of the 30S subunit. The chain is Small ribosomal subunit protein uS8 from Methanothermococcus thermolithotrophicus (Methanococcus thermolithotrophicus).